The chain runs to 82 residues: Hepcidin (82 aa).

The signal sequence occupies residues methionine 1–glycine 23. A propeptide spanning residues serine 24–glutamine 53 is cleaved from the precursor. Intrachain disulfides connect cysteine 64-cysteine 80, cysteine 67-cysteine 70, cysteine 68-cysteine 76, and cysteine 71-cysteine 79.

Belongs to the hepcidin family. Interacts with SLC40A1; this interaction promotes SLC40A1 rapid ubiquitination.

It localises to the secreted. Liver-produced hormone that constitutes the main circulating regulator of iron absorption and distribution across tissues. Acts by promoting endocytosis and degradation of ferroportin/SLC40A1, leading to the retention of iron in iron-exporting cells and decreased flow of iron into plasma. Controls the major flows of iron into plasma: absorption of dietary iron in the intestine, recycling of iron by macrophages, which phagocytose old erythrocytes and other cells, and mobilization of stored iron from hepatocytes. Functionally, has strong antimicrobial activity against E.coli ML35P N.cinerea and weaker against S.epidermidis, S.aureus and group b streptococcus bacteria. Active against the fungus C.albicans. No activity against P.aeruginosa. The protein is Hepcidin (HAMP) of Sus scrofa (Pig).